Consider the following 370-residue polypeptide: Tyrosine-protein kinase transforming protein SEA (370 aa).

The Protein kinase domain maps to 60–323; the sequence is THRSRVIGRG…GLVCELERVL (264 aa). Residues 66–74 and lysine 92 each bind ATP; that span reads IGRGHFGSV. Catalysis depends on aspartate 186, which acts as the Proton acceptor. Tyrosine 216 is subject to Phosphotyrosine; by autocatalysis. The interval 345–370 is disordered; sequence PPFPPAPRGQLPDSEDEEDEEEEVAE. Positions 357–370 are enriched in acidic residues; that stretch reads DSEDEEDEEEEVAE.

The protein belongs to the protein kinase superfamily. Tyr protein kinase family.

It catalyses the reaction L-tyrosyl-[protein] + ATP = O-phospho-L-tyrosyl-[protein] + ADP + H(+). The polypeptide is Tyrosine-protein kinase transforming protein SEA (V-SEA) (Galliformes).